The chain runs to 119 residues: uncharacterized protein (119 aa).

This is an uncharacterized protein from Homo sapiens (Human).